The chain runs to 203 residues: E3 ubiquitin-protein ligase RNF152 (203 aa).

The RING-type zinc finger occupies 12-55; sequence CQICFNYYSPRRRPKLLDCKHTCCSVCLQQMRTSQKDVRCPWCR. The necessary for interaction with RRAGA stretch occupies residues 106–165; that stretch reads ISKERTLLPGDMGCRLLPGSQQKSLTVVTIPAEQQPLQGGAPQEAVEEEPDRRGVAKSST. Residues 140–159 are disordered; the sequence is QPLQGGAPQEAVEEEPDRRG. The helical transmembrane segment at 167–187 threads the bilayer; that stretch reads SGVCTVILVACVLVFLLGIVL.

Belongs to the RNF152 family. In terms of assembly, interacts with RRAGA (inactive GDP-bound form); stimulated by amino acid starvation. Interacts with SEC16A. Post-translationally, ubiquitinated. Autoubiquitinated in vitro, leading to its degradation by the proteasome.

It localises to the lysosome membrane. The enzyme catalyses S-ubiquitinyl-[E2 ubiquitin-conjugating enzyme]-L-cysteine + [acceptor protein]-L-lysine = [E2 ubiquitin-conjugating enzyme]-L-cysteine + N(6)-ubiquitinyl-[acceptor protein]-L-lysine.. The protein operates within protein modification; protein ubiquitination. In terms of biological role, E3 ubiquitin-protein ligase that acts as a negative regulator of mTORC1 signaling by mediating ubiquitination of RagA/RRAGA and RHEB. Catalyzes 'Lys-63'-linked polyubiquitination of RagA/RRAGA in response to amino acid starvation, thereby regulating mTORC1 signaling. Also mediates monoubiquitination of RHEB, promoting its association with the TSC-TBC complex and subsequent inhibition. Also mediates 'Lys-48'-linked polyubiquitination of target proteins and their subsequent targeting to the proteasome for degradation. Induces apoptosis when overexpressed. The polypeptide is E3 ubiquitin-protein ligase RNF152 (Rattus norvegicus (Rat)).